We begin with the raw amino-acid sequence, 185 residues long: Ribosome-recycling factor (185 aa).

This sequence belongs to the RRF family.

The protein localises to the cytoplasm. Functionally, responsible for the release of ribosomes from messenger RNA at the termination of protein biosynthesis. May increase the efficiency of translation by recycling ribosomes from one round of translation to another. The polypeptide is Ribosome-recycling factor (Geobacillus sp. (strain WCH70)).